Here is an 89-residue protein sequence, read N- to C-terminus: Large ribosomal subunit protein bL27 (89 aa).

This sequence belongs to the bacterial ribosomal protein bL27 family.

This Synechococcus sp. (strain JA-3-3Ab) (Cyanobacteria bacterium Yellowstone A-Prime) protein is Large ribosomal subunit protein bL27.